The following is a 742-amino-acid chain: Zinc transporter ZIP6 (742 aa).

At 1-353 (MMTFLCTRSG…QRNTPVYIAW (353 aa)) the chain is on the extracellular side. Asparagine 94 and asparagine 127 each carry an N-linked (GlcNAc...) asparagine glycan. 2 disordered regions span residues 148 to 182 (PVTT…SQSD) and 191 to 210 (MNQE…RSRR). Residues 152 to 165 (KKGDMDHSVEKSDP) show a composition bias toward basic and acidic residues. A compositionally biased stretch (polar residues) spans 192 to 206 (NQESTTALTTPSYVT). 3 N-linked (GlcNAc...) asparagine glycosylation sites follow: asparagine 212, asparagine 232, and asparagine 237. The segment at 220–260 (TQDHASFSPSQPNVTHSNHTHHDEDTPTHQHDDHDEHEHAR) is disordered. Residues 222–236 (DHASFSPSQPNVTHS) are compositionally biased toward polar residues. The segment covering 239 to 260 (THHDEDTPTHQHDDHDEHEHAR) has biased composition (basic and acidic residues). N-linked (GlcNAc...) asparagine glycosylation is found at asparagine 267 and asparagine 337. The interval 310 to 342 (EDEHSDHSHHHKHHHHHHDHQHLQHPHNHTNGR) is disordered. The span at 316 to 339 (HSHHHKHHHHHHDHQHLQHPHNHT) shows a compositional bias: basic residues. Residues 354 to 374 (LGGFLSITLISLLALVGVVLI) traverse the membrane as a helical segment. Residues 375–385 (PLMNRVCFNFL) are Cytoplasmic-facing. Residues 386-406 (LSFLVALAVGTLSGDALLHLI) form a helical membrane-spanning segment. Residues 407–430 (PHSQGHHHHGHSEEHAEEEDSLRP) are Extracellular-facing. A helical membrane pass occupies residues 431–451 (VWTGLTALSGVYIMFLIEHFL). Topologically, residues 452–644 (TLGKMYKDKN…LKAGMSVRQA (193 aa)) are cytoplasmic. The helical transmembrane segment at 645-665 (MLYNLLSALMGYLGMIIGILI) threads the bilayer. Topologically, residues 666 to 671 (GHYAEN) are extracellular. A helical membrane pass occupies residues 672–692 (VATWIFALTAGLFMYVALVDM). At 693–710 (VPEMLHNDASEAGFSHYG) the chain is on the cytoplasmic side. Residues 711–731 (FFLLQNAGILLGFGIMLIIAV) form a helical membrane-spanning segment. The Extracellular segment spans residues 732 to 742 (FEDRIQLDLGY).

This sequence belongs to the ZIP transporter (TC 2.A.5) family. Cleaved on the N-terminus before locating to the plasma membrane. Post-translationally, N-glycosylated.

The protein resides in the cell membrane. It catalyses the reaction Zn(2+)(in) = Zn(2+)(out). Functionally, acts as a zinc-influx transporter which plays a role in zinc homeostasis and in the induction of epithelial-to-mesenchymal transition (EMT). This Danio rerio (Zebrafish) protein is Zinc transporter ZIP6.